Reading from the N-terminus, the 446-residue chain is Na(+)-translocating NADH-quinone reductase subunit A (446 aa).

It belongs to the NqrA family. Composed of six subunits; NqrA, NqrB, NqrC, NqrD, NqrE and NqrF.

The enzyme catalyses a ubiquinone + n Na(+)(in) + NADH + H(+) = a ubiquinol + n Na(+)(out) + NAD(+). Functionally, NQR complex catalyzes the reduction of ubiquinone-1 to ubiquinol by two successive reactions, coupled with the transport of Na(+) ions from the cytoplasm to the periplasm. NqrA to NqrE are probably involved in the second step, the conversion of ubisemiquinone to ubiquinol. The chain is Na(+)-translocating NADH-quinone reductase subunit A from Vibrio parahaemolyticus serotype O3:K6 (strain RIMD 2210633).